Reading from the N-terminus, the 182-residue chain is uncharacterized protein (182 aa).

This is an uncharacterized protein from Thermoproteus tenax (TTV1).